The following is a 180-amino-acid chain: MSEEVKEQNLPEVEPVQEAASDSVNLDALGDISKVEKLEKELGEITDKYYRANAEFENIKKRYEKEKADVASYANEKFARDLLPVIDALEIAANFDPEDDEFAKKIKEGILITINQFKKCFEKHGVSEIATDADFDPNVHNAVLRVDSEEKQSGQIVQALQKGYMINGRVLRPAMVSVAN.

The interval 1–21 is disordered; it reads MSEEVKEQNLPEVEPVQEAAS.

Belongs to the GrpE family. As to quaternary structure, homodimer.

The protein localises to the cytoplasm. Functionally, participates actively in the response to hyperosmotic and heat shock by preventing the aggregation of stress-denatured proteins, in association with DnaK and GrpE. It is the nucleotide exchange factor for DnaK and may function as a thermosensor. Unfolded proteins bind initially to DnaJ; upon interaction with the DnaJ-bound protein, DnaK hydrolyzes its bound ATP, resulting in the formation of a stable complex. GrpE releases ADP from DnaK; ATP binding to DnaK triggers the release of the substrate protein, thus completing the reaction cycle. Several rounds of ATP-dependent interactions between DnaJ, DnaK and GrpE are required for fully efficient folding. This is Protein GrpE from Campylobacter concisus (strain 13826).